The sequence spans 118 residues: Large ribosomal subunit protein bL20 (118 aa).

This sequence belongs to the bacterial ribosomal protein bL20 family.

In terms of biological role, binds directly to 23S ribosomal RNA and is necessary for the in vitro assembly process of the 50S ribosomal subunit. It is not involved in the protein synthesizing functions of that subunit. The protein is Large ribosomal subunit protein bL20 of Azotobacter vinelandii.